The primary structure comprises 339 residues: Dihydroorotate dehydrogenase (quinone) (339 aa).

FMN is bound by residues 62-66 (AGMDK) and Thr86. Lys66 contributes to the substrate binding site. 111 to 115 (NRMGF) lines the substrate pocket. FMN is bound by residues Asn139 and Asn172. Asn172 provides a ligand contact to substrate. Ser175 functions as the Nucleophile in the catalytic mechanism. Asn177 is a binding site for substrate. The FMN site is built by Lys217 and Thr245. Substrate is bound at residue 246-247 (NT). Residues Gly268, Gly297, and 318 to 319 (YS) contribute to the FMN site.

This sequence belongs to the dihydroorotate dehydrogenase family. Type 2 subfamily. As to quaternary structure, monomer. It depends on FMN as a cofactor.

The protein resides in the cell membrane. The catalysed reaction is (S)-dihydroorotate + a quinone = orotate + a quinol. It participates in pyrimidine metabolism; UMP biosynthesis via de novo pathway; orotate from (S)-dihydroorotate (quinone route): step 1/1. Functionally, catalyzes the conversion of dihydroorotate to orotate with quinone as electron acceptor. This chain is Dihydroorotate dehydrogenase (quinone), found in Shewanella piezotolerans (strain WP3 / JCM 13877).